The chain runs to 197 residues: Protein GrpE (197 aa).

The span at 1-27 shows a compositional bias: basic and acidic residues; sequence MTKQEKAENQEKPTEETVEETPKKETP. The interval 1–50 is disordered; it reads MTKQEKAENQEKPTEETVEETPKKETPFEPVMEADEVEETTEAQAPVEEA. Residues 32-41 are compositionally biased toward acidic residues; sequence MEADEVEETT.

The protein belongs to the GrpE family. In terms of assembly, homodimer.

The protein resides in the cytoplasm. Participates actively in the response to hyperosmotic and heat shock by preventing the aggregation of stress-denatured proteins, in association with DnaK and GrpE. It is the nucleotide exchange factor for DnaK and may function as a thermosensor. Unfolded proteins bind initially to DnaJ; upon interaction with the DnaJ-bound protein, DnaK hydrolyzes its bound ATP, resulting in the formation of a stable complex. GrpE releases ADP from DnaK; ATP binding to DnaK triggers the release of the substrate protein, thus completing the reaction cycle. Several rounds of ATP-dependent interactions between DnaJ, DnaK and GrpE are required for fully efficient folding. This Latilactobacillus sakei (Lactobacillus sakei) protein is Protein GrpE.